We begin with the raw amino-acid sequence, 315 residues long: tRNA-dihydrouridine(16) synthase (315 aa).

FMN is bound by residues 7–9 (PME) and Gln68. The active-site Proton donor is the Cys98. FMN-binding positions include Lys139, 199 to 201 (NGE), and 223 to 224 (GR).

It belongs to the Dus family. DusC subfamily. The cofactor is FMN.

The catalysed reaction is 5,6-dihydrouridine(16) in tRNA + NADP(+) = uridine(16) in tRNA + NADPH + H(+). It catalyses the reaction 5,6-dihydrouridine(16) in tRNA + NAD(+) = uridine(16) in tRNA + NADH + H(+). Its function is as follows. Catalyzes the synthesis of 5,6-dihydrouridine (D), a modified base found in the D-loop of most tRNAs, via the reduction of the C5-C6 double bond in target uridines. Specifically modifies U16 in tRNAs. In Shewanella oneidensis (strain ATCC 700550 / JCM 31522 / CIP 106686 / LMG 19005 / NCIMB 14063 / MR-1), this protein is tRNA-dihydrouridine(16) synthase.